A 433-amino-acid polypeptide reads, in one-letter code: 4-hydroxy-3-methylbut-2-en-1-yl diphosphate synthase (flavodoxin) (433 aa).

Residues methionine 1 to proline 10 are compositionally biased toward polar residues. Positions methionine 1–arginine 24 are disordered. [4Fe-4S] cluster-binding residues include cysteine 320, cysteine 323, cysteine 366, and glutamate 373.

Belongs to the IspG family. It depends on [4Fe-4S] cluster as a cofactor.

It carries out the reaction (2E)-4-hydroxy-3-methylbut-2-enyl diphosphate + oxidized [flavodoxin] + H2O + 2 H(+) = 2-C-methyl-D-erythritol 2,4-cyclic diphosphate + reduced [flavodoxin]. Its pathway is isoprenoid biosynthesis; isopentenyl diphosphate biosynthesis via DXP pathway; isopentenyl diphosphate from 1-deoxy-D-xylulose 5-phosphate: step 5/6. In terms of biological role, converts 2C-methyl-D-erythritol 2,4-cyclodiphosphate (ME-2,4cPP) into 1-hydroxy-2-methyl-2-(E)-butenyl 4-diphosphate. The sequence is that of 4-hydroxy-3-methylbut-2-en-1-yl diphosphate synthase (flavodoxin) from Bordetella bronchiseptica (strain ATCC BAA-588 / NCTC 13252 / RB50) (Alcaligenes bronchisepticus).